We begin with the raw amino-acid sequence, 152 residues long: Endoribonuclease YbeY (152 aa).

Residues histidine 113, histidine 117, and histidine 123 each coordinate Zn(2+).

This sequence belongs to the endoribonuclease YbeY family. It depends on Zn(2+) as a cofactor.

The protein localises to the cytoplasm. Single strand-specific metallo-endoribonuclease involved in late-stage 70S ribosome quality control and in maturation of the 3' terminus of the 16S rRNA. The protein is Endoribonuclease YbeY of Janthinobacterium sp. (strain Marseille) (Minibacterium massiliensis).